A 721-amino-acid chain; its full sequence is Exo beta-1,2-glucooligosaccharide sophorohydrolase (non-reducing end) (721 aa).

An N-terminal signal peptide occupies residues 1 to 18 (MKHIALLTTLLLSASLQA). A Glycoamylase-like domain is found at 474 to 708 (NHKLIGWNET…LLWNLFMSHP (235 aa)).

In terms of assembly, monomer.

The protein resides in the periplasm. The catalysed reaction is [(1-&gt;2)-beta-D-glucosyl](n) + H2O = [(1-&gt;2)-beta-D-glucosyl](n-2) + sophorose. Functionally, catalyzes the hydrolysis of linear beta-1,2-glucan and beta-1,2-glucooligosaccharides with degrees of polymerization (DPs) greater than or equal to 4, to produce sophorose. The best substrates are tetra- and pentasaccharides. Acts as an exo-type enzyme that releases sophorose from the non-reducing end of the substrate. It cannot hydrolyze cyclic beta-1,2-glucans. This Parabacteroides distasonis (strain ATCC 8503 / DSM 20701 / CIP 104284 / JCM 5825 / NCTC 11152) protein is Exo beta-1,2-glucooligosaccharide sophorohydrolase (non-reducing end).